The chain runs to 763 residues: Phosphoglycerol transferase I (763 aa).

4 helical membrane-spanning segments follow: residues 1-21 (MSEL…AWKA), 26-46 (WWFA…ITLF), 77-97 (ILPG…LGWI), and 108-128 (FGYS…SPAF).

This sequence belongs to the OpgB family.

Its subcellular location is the cell inner membrane. The enzyme catalyses a phosphatidylglycerol + a membrane-derived-oligosaccharide D-glucose = a 1,2-diacyl-sn-glycerol + a membrane-derived-oligosaccharide 6-(glycerophospho)-D-glucose.. It participates in glycan metabolism; osmoregulated periplasmic glucan (OPG) biosynthesis. Its function is as follows. Transfers a phosphoglycerol residue from phosphatidylglycerol to the membrane-bound nascent glucan backbones. This chain is Phosphoglycerol transferase I, found in Escherichia coli (strain ATCC 8739 / DSM 1576 / NBRC 3972 / NCIMB 8545 / WDCM 00012 / Crooks).